The chain runs to 735 residues: Ribosomal protein S6 kinase alpha-1 (735 aa).

Serine 54 carries the post-translational modification Phosphoserine. The 260-residue stretch at 62 to 321 folds into the Protein kinase 1 domain; it reads FELLKVLGQG…AEEIKRHIFY (260 aa). ATP contacts are provided by residues 68–76 and lysine 94; that span reads LGQGSFGKV. The Proton acceptor role is filled by aspartate 187. Residue serine 221 is modified to Phosphoserine; by PDPK1. The residue at position 307 (serine 307) is a Phosphoserine. The AGC-kinase C-terminal domain maps to 322–391; sequence STIDWNKLYR…VATGLMEDDS (70 aa). Threonine 359 carries the phosphothreonine modification. Serine 363 is modified (phosphoserine). A phosphoserine; by autocatalysis mark is found at serine 369 and serine 380. Residues 418–675 form the Protein kinase 2 domain; sequence YIVKETIGVG…AKQVLQHPWI (258 aa). Residues 424–432 and lysine 447 each bind ATP; that span reads IGVGSYSVC. Catalysis depends on aspartate 535, which acts as the Proton acceptor. Threonine 573 bears the Phosphothreonine mark. Serine 732 is modified (phosphoserine).

The protein belongs to the protein kinase superfamily. AGC Ser/Thr protein kinase family. S6 kinase subfamily. In terms of assembly, forms a complex with either MAPK1/ERK2 or MAPK3/ERK1 in quiescent cells. Transiently dissociates following mitogenic stimulation. Interacts with ETV1/ER81 and FGFR1. It depends on Mg(2+) as a cofactor. Activated by phosphorylation at Ser-221 by PDPK1. Autophosphorylated on Ser-380, as part of the activation process. May be phosphorylated at Thr-359 and Ser-363 by MAPK1/ERK2 and MAPK3/ERK1. In terms of processing, N-terminal myristoylation results in an activated kinase in the absence of added growth factors.

Its subcellular location is the nucleus. It is found in the cytoplasm. The catalysed reaction is L-seryl-[protein] + ATP = O-phospho-L-seryl-[protein] + ADP + H(+). It carries out the reaction L-threonyl-[protein] + ATP = O-phospho-L-threonyl-[protein] + ADP + H(+). Its activity is regulated as follows. Upon extracellular signal or mitogen stimulation, phosphorylated at Thr-573 in the C-terminal kinase domain (CTKD) by MAPK1/ERK2 and MAPK3/ERK1. The activated CTKD then autophosphorylates Ser-380, allowing binding of PDPK1, which in turn phosphorylates Ser-221 in the N-terminal kinase domain (NTDK) leading to the full activation of the protein and subsequent phosphorylation of the substrates by the NTKD. In terms of biological role, serine/threonine-protein kinase that acts downstream of ERK (MAPK1/ERK2 and MAPK3/ERK1) signaling and mediates mitogenic and stress-induced activation of the transcription factors CREB1, ETV1/ER81 and NR4A1/NUR77, regulates translation through RPS6 and EIF4B phosphorylation, and mediates cellular proliferation, survival, and differentiation by modulating mTOR signaling and repressing pro-apoptotic function of BAD and DAPK1. In fibroblast, is required for EGF-stimulated phosphorylation of CREB1, which results in the subsequent transcriptional activation of several immediate-early genes. In response to mitogenic stimulation (EGF and PMA), phosphorylates and activates NR4A1/NUR77 and ETV1/ER81 transcription factors and the cofactor CREBBP. Upon insulin-derived signal, acts indirectly on the transcription regulation of several genes by phosphorylating GSK3B at 'Ser-9' and inhibiting its activity. Phosphorylates RPS6 in response to serum or EGF via an mTOR-independent mechanism and promotes translation initiation by facilitating assembly of the pre-initiation complex. In response to insulin, phosphorylates EIF4B, enhancing EIF4B affinity for the EIF3 complex and stimulating cap-dependent translation. Is involved in the mTOR nutrient-sensing pathway by directly phosphorylating TSC2 at 'Ser-1798', which potently inhibits TSC2 ability to suppress mTOR signaling, and mediates phosphorylation of RPTOR, which regulates mTORC1 activity and may promote rapamycin-sensitive signaling independently of the PI3K/AKT pathway. Also involved in feedback regulation of mTORC1 and mTORC2 by phosphorylating DEPTOR. Mediates cell survival by phosphorylating the pro-apoptotic proteins BAD and DAPK1 and suppressing their pro-apoptotic function. Promotes the survival of hepatic stellate cells by phosphorylating CEBPB in response to the hepatotoxin carbon tetrachloride (CCl4). Mediates induction of hepatocyte prolifration by TGFA through phosphorylation of CEBPB. Is involved in cell cycle regulation by phosphorylating the CDK inhibitor CDKN1B, which promotes CDKN1B association with 14-3-3 proteins and prevents its translocation to the nucleus and inhibition of G1 progression. Phosphorylates EPHA2 at 'Ser-897', the RPS6KA-EPHA2 signaling pathway controls cell migration. In response to mTORC1 activation, phosphorylates EIF4B at 'Ser-406' and 'Ser-422' which stimulates bicarbonate cotransporter SLC4A7 mRNA translation, increasing SLC4A7 protein abundance and function. In Rattus norvegicus (Rat), this protein is Ribosomal protein S6 kinase alpha-1 (Rps6ka1).